Consider the following 181-residue polypeptide: Peptidyl-prolyl cis-trans isomerase H (181 aa).

Residues F17–E180 form the PPIase cyclophilin-type domain.

It belongs to the cyclophilin-type PPIase family. PPIase H subfamily.

It is found in the nucleus. The enzyme catalyses [protein]-peptidylproline (omega=180) = [protein]-peptidylproline (omega=0). PPIases accelerate the folding of proteins. It catalyzes the cis-trans isomerization of proline imidic peptide bonds in oligopeptides. The chain is Peptidyl-prolyl cis-trans isomerase H (cyp3) from Aspergillus fumigatus (strain ATCC MYA-4609 / CBS 101355 / FGSC A1100 / Af293) (Neosartorya fumigata).